The following is a 290-amino-acid chain: Prepilin leader peptidase/N-methyltransferase (290 aa).

The helical transmembrane segment at Ala-13–Val-33 threads the bilayer. The Zn(2+) site is built by Cys-72, Cys-75, Cys-97, and Cys-100. A run of 5 helical transmembrane segments spans residues Phe-128 to Ile-148, Val-158 to Ser-178, Leu-183 to Val-203, Ile-228 to Leu-248, and Phe-261 to Gly-276.

It belongs to the peptidase A24 family. Zn(2+) is required as a cofactor.

The protein localises to the cell inner membrane. The catalysed reaction is Typically cleaves a -Gly-|-Phe- bond to release an N-terminal, basic peptide of 5-8 residues from type IV prepilin, and then N-methylates the new N-terminal amino group, the methyl donor being S-adenosyl-L-methionine.. Functionally, plays an essential role in type IV pili and type II pseudopili formation by proteolytically removing the leader sequence from substrate proteins and subsequently monomethylating the alpha-amino group of the newly exposed N-terminal phenylalanine. Substrates include proteins required for pilus biogenesis PilE, PilV, PilW, and PilX as well as some components of the type II general secretory apparatus GspG, GspH, GspI and GspJ. In Pseudomonas aeruginosa (strain ATCC 15692 / DSM 22644 / CIP 104116 / JCM 14847 / LMG 12228 / 1C / PRS 101 / PAO1), this protein is Prepilin leader peptidase/N-methyltransferase (pilD).